We begin with the raw amino-acid sequence, 185 residues long: Ribosome-recycling factor (185 aa).

Belongs to the RRF family.

The protein resides in the cytoplasm. In terms of biological role, responsible for the release of ribosomes from messenger RNA at the termination of protein biosynthesis. May increase the efficiency of translation by recycling ribosomes from one round of translation to another. The sequence is that of Ribosome-recycling factor from Mycolicibacterium vanbaalenii (strain DSM 7251 / JCM 13017 / BCRC 16820 / KCTC 9966 / NRRL B-24157 / PYR-1) (Mycobacterium vanbaalenii).